A 281-amino-acid chain; its full sequence is BEN domain-containing protein 6 (281 aa).

Disordered regions lie at residues 15–62 and 143–172; these read VLRK…ETPL and SFAS…PGEK. Residues 19 to 99 are a coiled coil; it reads RKRKRTETAN…RLRQSLVMLQ (81 aa). Low complexity predominate over residues 143 to 160; it reads SFASLCSNSNSTSSSPSS. The span at 162-172 shows a compositional bias: basic and acidic residues; sequence KAEEEQHPGEK. The BEN domain occupies 171–271; sequence EKQFTIERWQ…NCTKKPNASK (101 aa).

Interacts (via BEN domain) with RBPJ.

It localises to the nucleus. Its function is as follows. Acts as a corepressor of recombining binding protein suppressor hairless (RBPJ) and inhibits Notch signaling in neural stem cells, thereby opposing their self-renewal and promoting neurogenesis. In Mus musculus (Mouse), this protein is BEN domain-containing protein 6 (Bend6).